A 142-amino-acid chain; its full sequence is Nucleoside diphosphate kinase (142 aa).

Residues Lys-11, Phe-59, Arg-87, Thr-93, Arg-104, and Asn-114 each coordinate ATP. Residue His-117 is the Pros-phosphohistidine intermediate of the active site.

The protein belongs to the NDK family. As to quaternary structure, homotetramer. Mg(2+) is required as a cofactor.

It is found in the cytoplasm. The catalysed reaction is a 2'-deoxyribonucleoside 5'-diphosphate + ATP = a 2'-deoxyribonucleoside 5'-triphosphate + ADP. It catalyses the reaction a ribonucleoside 5'-diphosphate + ATP = a ribonucleoside 5'-triphosphate + ADP. Functionally, major role in the synthesis of nucleoside triphosphates other than ATP. The ATP gamma phosphate is transferred to the NDP beta phosphate via a ping-pong mechanism, using a phosphorylated active-site intermediate. This Salinibacter ruber (strain DSM 13855 / M31) protein is Nucleoside diphosphate kinase.